A 122-amino-acid chain; its full sequence is Serum amyloid A-2 protein (122 aa).

The signal sequence occupies residues 1–18; that stretch reads MKLLSGLLLCSLVLGVSG. Glutamine 19 carries the pyrrolidone carboxylic acid modification. The segment at 90-122 is disordered; the sequence is GAEDSMADQAANEWGRSGKDPNHFRPKGLPDKY. Over residues 105–122 the composition is skewed to basic and acidic residues; sequence RSGKDPNHFRPKGLPDKY.

The protein belongs to the SAA family. As to quaternary structure, apolipoprotein of the HDL complex. Expressed by the liver; secreted in plasma.

The protein localises to the secreted. Major acute phase reactant. The polypeptide is Serum amyloid A-2 protein (SAA2) (Oryctolagus cuniculus (Rabbit)).